The sequence spans 1134 residues: MMS19 nucleotide excision repair protein homolog (1134 aa).

HEAT repeat units lie at residues 959-998 (QRCFSTIVPILESLIMNSQTSLSRTMLHVALAHVISNVPV), 1002-1047 (LDNT…KGQQ), 1050-1089 (SDNAHIIIECLIKLTSYPHLMVVRETSIQCLVALLELPHR), and 1092-1130 (YPFRREVLQAIEKSLDDPKRKVREEAIRCRQAWASITSG).

It belongs to the MET18/MMS19 family. Part of a complex composed of AE7, CIA1, MMS19 and NAR1. Interacts with AE7.

Its subcellular location is the nucleus. The protein resides in the cytoplasm. May select specific target apoproteins to which a Fe-S cluster produced by the cytosolic iron-sulfur (Fe-S) protein assembly (CIA) pathway is transferred. This is MMS19 nucleotide excision repair protein homolog from Arabidopsis thaliana (Mouse-ear cress).